The chain runs to 331 residues: E3 ubiquitin-protein ligase Siah2 (331 aa).

Residues 1-26 are disordered; it reads MSRPSSAGGAAGGLGAGKAGGSKHGG. The segment covering 9 to 26 has biased composition (gly residues); the sequence is GAAGGLGAGKAGGSKHGG. Residues 89–124 form an RING-type zinc finger; that stretch reads CPVCFDYVLPPILQCQAGHLVCNQCRQKLSCCPTCR. An SBD region spans residues 139–331; it reads VASTLPFPCK…LGINVTISMC (193 aa). An SIAH-type zinc finger spans residues 142 to 202; the sequence is TLPFPCKYSS…VMPHLMHAHK (61 aa). Zn(2+) is bound by residues C147, C154, H166, C170, C177, C184, H196, and H201.

This sequence belongs to the SINA (Seven in absentia) family. As to quaternary structure, homodimer. In terms of tissue distribution, in embryos it is expressed in all blastomeres starting at the mid-blastulla. After 20 somite stage, it is expressed mainly in the posterior part. Expressed in brain, including the eye, the cranial cavity, otic vesicle, optic chiasm and in the gut.

The enzyme catalyses S-ubiquitinyl-[E2 ubiquitin-conjugating enzyme]-L-cysteine + [acceptor protein]-L-lysine = [E2 ubiquitin-conjugating enzyme]-L-cysteine + N(6)-ubiquitinyl-[acceptor protein]-L-lysine.. It participates in protein modification; protein ubiquitination. Functionally, E3 ubiquitin-protein ligase that mediates ubiquitination and subsequent proteasomal degradation of target proteins. E3 ubiquitin ligases accept ubiquitin from an E2 ubiquitin-conjugating enzyme in the form of a thioester and then directly transfers the ubiquitin to targeted substrates. It probably triggers the ubiquitin-mediated degradation of different substrates. Induces cellular growth arrest by inhibiting the G2/M transition. May play a role in the regulation of the cellular clock function. This is E3 ubiquitin-protein ligase Siah2 (siah2l) from Danio rerio (Zebrafish).